A 482-amino-acid chain; its full sequence is Catalase easC (482 aa).

His-58 is an active-site residue. Tyr-347 contributes to the heme binding site.

The protein belongs to the catalase family. Heme is required as a cofactor.

Its pathway is alkaloid biosynthesis; ergot alkaloid biosynthesis. Functionally, catalase; part of the gene cluster that mediates the biosynthesis of fungal ergot alkaloid. DmaW catalyzes the first step of ergot alkaloid biosynthesis by condensing dimethylallyl diphosphate (DMAP) and tryptophan to form 4-dimethylallyl-L-tryptophan. The second step is catalyzed by the methyltransferase easF that methylates 4-dimethylallyl-L-tryptophan in the presence of S-adenosyl-L-methionine, resulting in the formation of 4-dimethylallyl-L-abrine. The catalase easC and the FAD-dependent oxidoreductase easE then transform 4-dimethylallyl-L-abrine to chanoclavine-I which is further oxidized by easD in the presence of NAD(+), resulting in the formation of chanoclavine-I aldehyde. Chanoclavine-I aldehyde is the precursor of ergoamides and ergopeptines in Clavicipitaceae, and clavine-type alcaloids such as fumiclavine in Trichocomaceae. However, the metabolites downstream of chanoclavine-I aldehyde in Arthrodermataceae have not been identified yet. This is Catalase easC from Arthroderma otae (strain ATCC MYA-4605 / CBS 113480) (Microsporum canis).